The following is a 98-amino-acid chain: Large ribosomal subunit protein uL23 (98 aa).

The protein belongs to the universal ribosomal protein uL23 family. In terms of assembly, part of the 50S ribosomal subunit. Contacts protein L29, and trigger factor when it is bound to the ribosome.

In terms of biological role, one of the early assembly proteins it binds 23S rRNA. One of the proteins that surrounds the polypeptide exit tunnel on the outside of the ribosome. Forms the main docking site for trigger factor binding to the ribosome. The chain is Large ribosomal subunit protein uL23 from Gluconacetobacter diazotrophicus (strain ATCC 49037 / DSM 5601 / CCUG 37298 / CIP 103539 / LMG 7603 / PAl5).